The following is a 111-amino-acid chain: Large ribosomal subunit protein uL22 (111 aa).

It belongs to the universal ribosomal protein uL22 family. In terms of assembly, part of the 50S ribosomal subunit.

In terms of biological role, this protein binds specifically to 23S rRNA; its binding is stimulated by other ribosomal proteins, e.g. L4, L17, and L20. It is important during the early stages of 50S assembly. It makes multiple contacts with different domains of the 23S rRNA in the assembled 50S subunit and ribosome. The globular domain of the protein is located near the polypeptide exit tunnel on the outside of the subunit, while an extended beta-hairpin is found that lines the wall of the exit tunnel in the center of the 70S ribosome. The polypeptide is Large ribosomal subunit protein uL22 (Clostridium perfringens (strain ATCC 13124 / DSM 756 / JCM 1290 / NCIMB 6125 / NCTC 8237 / Type A)).